We begin with the raw amino-acid sequence, 154 residues long: Ribosomal RNA large subunit methyltransferase H (154 aa).

Residues Leu-70, Gly-102, and 121–126 contribute to the S-adenosyl-L-methionine site; that span reads LSRMTL.

It belongs to the RNA methyltransferase RlmH family. As to quaternary structure, homodimer.

It is found in the cytoplasm. It catalyses the reaction pseudouridine(1915) in 23S rRNA + S-adenosyl-L-methionine = N(3)-methylpseudouridine(1915) in 23S rRNA + S-adenosyl-L-homocysteine + H(+). In terms of biological role, specifically methylates the pseudouridine at position 1915 (m3Psi1915) in 23S rRNA. This is Ribosomal RNA large subunit methyltransferase H from Citrifermentans bemidjiense (strain ATCC BAA-1014 / DSM 16622 / JCM 12645 / Bem) (Geobacter bemidjiensis).